A 1132-amino-acid chain; its full sequence is Protein sel-1 homolog 3 (1132 aa).

A disordered region spans residues 1 to 24; sequence MQRRGAGLGWPRQQQQQPPPLAVG. 3 N-linked (GlcNAc...) asparagine glycosylation sites follow: N201, N382, and N527. 7 Sel1-like repeats span residues 575-609, 611-647, 694-730, 732-767, 768-800, 801-839, and 840-877; these read YLAV…RLSS, NLGY…DQHT, RLAQ…PALI, DYAI…QAVN, GLGW…DASY, NLGV…EGTL, and WCSL…LGHV. S608 bears the Phosphoserine mark. The N-linked (GlcNAc...) asparagine glycan is linked to N937. One copy of the Sel1-like 8 repeat lies at 952-988; sequence KMGDLYYYGHQNQSQDLELSVQMYAQAALDGDSQGFF. The helical transmembrane segment at 1057-1077 threads the bilayer; the sequence is ILHSALIYFLGTFLLSILIAW. Positions 1087–1132 are disordered; the sequence is ASDPPPRPSQASPDTATSTASPAVTPAADASDQDQPTVTNNPEPRG. Low complexity predominate over residues 1097–1116; that stretch reads ASPDTATSTASPAVTPAADA. A compositionally biased stretch (polar residues) spans 1119-1132; sequence QDQPTVTNNPEPRG.

The protein resides in the membrane. This chain is Protein sel-1 homolog 3 (SEL1L3), found in Homo sapiens (Human).